Consider the following 339-residue polypeptide: Ribosomal RNA small subunit methyltransferase H (339 aa).

Residues 44–46 (GGY), D61, F88, D105, and Q112 each bind S-adenosyl-L-methionine. The interval 263-312 (PQAQSRHLPEKAAAQPVFEKPMKPVSPGEAETAENPRARSAHLRAARRTA) is disordered. Over residues 301-312 (RSAHLRAARRTA) the composition is skewed to basic residues.

Belongs to the methyltransferase superfamily. RsmH family.

It localises to the cytoplasm. The catalysed reaction is cytidine(1402) in 16S rRNA + S-adenosyl-L-methionine = N(4)-methylcytidine(1402) in 16S rRNA + S-adenosyl-L-homocysteine + H(+). Functionally, specifically methylates the N4 position of cytidine in position 1402 (C1402) of 16S rRNA. The polypeptide is Ribosomal RNA small subunit methyltransferase H (Chelativorans sp. (strain BNC1)).